A 436-amino-acid polypeptide reads, in one-letter code: Trigger factor (436 aa).

Residues 163 to 248 form the PPIase FKBP-type domain; that stretch reads GDRVVLDFAG…VKEVAEGVLP (86 aa).

The protein belongs to the FKBP-type PPIase family. Tig subfamily.

It localises to the cytoplasm. It carries out the reaction [protein]-peptidylproline (omega=180) = [protein]-peptidylproline (omega=0). In terms of biological role, involved in protein export. Acts as a chaperone by maintaining the newly synthesized protein in an open conformation. Functions as a peptidyl-prolyl cis-trans isomerase. The sequence is that of Trigger factor from Bordetella parapertussis (strain 12822 / ATCC BAA-587 / NCTC 13253).